Consider the following 367-residue polypeptide: D-alanine--D-alanine ligase (367 aa).

The ATP-grasp domain occupies 139–340; that stretch reads KLILKEKNIP…FSQVIDNMIS (202 aa). 169–224 serves as a coordination point for ATP; the sequence is KEVLEYPMIVKPARLGSSIGVKKVNDKCELEEAIETAFSFDDKVIVEKWIDSRELN. Mg(2+) is bound by residues D298, E311, and N313.

This sequence belongs to the D-alanine--D-alanine ligase family. Requires Mg(2+) as cofactor. The cofactor is Mn(2+).

It is found in the cytoplasm. It carries out the reaction 2 D-alanine + ATP = D-alanyl-D-alanine + ADP + phosphate + H(+). The protein operates within cell wall biogenesis; peptidoglycan biosynthesis. Functionally, cell wall formation. This chain is D-alanine--D-alanine ligase, found in Thermosipho africanus (strain TCF52B).